A 310-amino-acid polypeptide reads, in one-letter code: Ribonuclease HIII (310 aa).

Positions 91–307 constitute an RNase H type-2 domain; sequence YNCIGSDEAG…REKAQNLVTK (217 aa). A divalent metal cation contacts are provided by D97, E98, and D202.

It belongs to the RNase HII family. RnhC subfamily. It depends on Mn(2+) as a cofactor. Mg(2+) is required as a cofactor.

Its subcellular location is the cytoplasm. It carries out the reaction Endonucleolytic cleavage to 5'-phosphomonoester.. Endonuclease that specifically degrades the RNA of RNA-DNA hybrids. The protein is Ribonuclease HIII of Staphylococcus haemolyticus (strain JCSC1435).